We begin with the raw amino-acid sequence, 316 residues long: Dof zinc finger protein DOF5.7 (316 aa).

Positions 1 to 42 (MSSHTNLPSPKPVPKPDHRISGTSQTKKPPSSSVAQDQQNLK) are disordered. Polar residues predominate over residues 21–42 (SGTSQTKKPPSSSVAQDQQNLK). A Dof-type zinc finger spans residues 41-95 (LKCPRCNSPNTKFCYYNNYSLSQPRHFCKSCRRYWTRGGALRNVPIGGGCRKTKK). The Zn(2+) site is built by Cys-43, Cys-46, Cys-68, and Cys-71. Disordered stretches follow at residues 92–111 (KTKK…SSSS) and 257–294 (NSSS…NTGG). The segment covering 101 to 111 (SSMNTLPSSSS) has biased composition (low complexity). Positions 257 to 291 (NSSSPSSPTKKGDNQTEWYFGNNSDNEGVISNNAN) are enriched in polar residues.

The protein resides in the nucleus. Its function is as follows. Transcription factor that binds specifically to a 5'-AA[AG]G-3' consensus core sequence. This is Dof zinc finger protein DOF5.7 (DOF5.7) from Arabidopsis thaliana (Mouse-ear cress).